A 302-amino-acid chain; its full sequence is Putative gluconeogenesis factor (302 aa).

The protein belongs to the gluconeogenesis factor family.

It localises to the cytoplasm. Functionally, required for morphogenesis under gluconeogenic growth conditions. This is Putative gluconeogenesis factor (ybhK) from Salmonella typhimurium (strain LT2 / SGSC1412 / ATCC 700720).